The chain runs to 466 residues: Glutamate--tRNA ligase 1 (466 aa).

The 'HIGH' region signature appears at 10-20 (PSPTGLIHLGN). Zn(2+) contacts are provided by Cys-103, Cys-105, Cys-130, and His-132. A 'KMSKS' region motif is present at residues 247–251 (PLSKR). ATP is bound at residue Lys-250.

The protein belongs to the class-I aminoacyl-tRNA synthetase family. Glutamate--tRNA ligase type 1 subfamily. As to quaternary structure, monomer. Zn(2+) serves as cofactor.

It is found in the cytoplasm. It catalyses the reaction tRNA(Glu) + L-glutamate + ATP = L-glutamyl-tRNA(Glu) + AMP + diphosphate. Its function is as follows. Catalyzes the attachment of glutamate to tRNA(Glu) in a two-step reaction: glutamate is first activated by ATP to form Glu-AMP and then transferred to the acceptor end of tRNA(Glu). The protein is Glutamate--tRNA ligase 1 of Methylococcus capsulatus (strain ATCC 33009 / NCIMB 11132 / Bath).